The following is a 512-amino-acid chain: Oxalate--CoA ligase (512 aa).

ATP is bound at residue 168–179; the sequence is HTSGTTGRPKVV. 2 positions are modified to phosphoserine: Ser283 and Ser284. An FACS motif is present at residues 381-429; that stretch reads DRFFRTGDEGKLDKDGYVFITGRIKELVNRGGEKISPAEIDAVLMQHPD. The short motif at 510-512 is the Microbody targeting signal element; that stretch reads AKL.

It belongs to the ATP-dependent AMP-binding enzyme family.

Its subcellular location is the peroxisome matrix. It is found in the peroxisome membrane. The catalysed reaction is oxalate + ATP + CoA = oxalyl-CoA + AMP + diphosphate. Its function is as follows. Catalyzes the first step in a degradation pathway of oxalate to CO(2) to protect the cell against the harmful effects of oxalate derived from endogenous processes or an environmental sources. This chain is Oxalate--CoA ligase (pcs60), found in Schizosaccharomyces pombe (strain 972 / ATCC 24843) (Fission yeast).